A 73-amino-acid polypeptide reads, in one-letter code: Translation initiation factor IF-1 (73 aa).

The region spanning 1–73 (MDIKEEAIET…TKGRIVYREK (73 aa)) is the S1-like domain.

The protein belongs to the IF-1 family. In terms of assembly, component of the 30S ribosomal translation pre-initiation complex which assembles on the 30S ribosome in the order IF-2 and IF-3, IF-1 and N-formylmethionyl-tRNA(fMet); mRNA recruitment can occur at any time during PIC assembly.

It localises to the cytoplasm. Its function is as follows. One of the essential components for the initiation of protein synthesis. Stabilizes the binding of IF-2 and IF-3 on the 30S subunit to which N-formylmethionyl-tRNA(fMet) subsequently binds. Helps modulate mRNA selection, yielding the 30S pre-initiation complex (PIC). Upon addition of the 50S ribosomal subunit IF-1, IF-2 and IF-3 are released leaving the mature 70S translation initiation complex. In Borreliella afzelii (strain PKo) (Borrelia afzelii), this protein is Translation initiation factor IF-1.